A 230-amino-acid chain; its full sequence is Large ribosomal subunit protein uL1 (230 aa).

It belongs to the universal ribosomal protein uL1 family. As to quaternary structure, part of the 50S ribosomal subunit.

In terms of biological role, binds directly to 23S rRNA. The L1 stalk is quite mobile in the ribosome, and is involved in E site tRNA release. Functionally, protein L1 is also a translational repressor protein, it controls the translation of the L11 operon by binding to its mRNA. This chain is Large ribosomal subunit protein uL1, found in Bacillus cereus (strain B4264).